The chain runs to 415 residues: Esterase FrsA (415 aa).

This sequence belongs to the FrsA family.

The enzyme catalyses a carboxylic ester + H2O = an alcohol + a carboxylate + H(+). Catalyzes the hydrolysis of esters. This chain is Esterase FrsA, found in Vibrio parahaemolyticus serotype O3:K6 (strain RIMD 2210633).